Reading from the N-terminus, the 950-residue chain is 2-oxoglutarate dehydrogenase E1 component (950 aa).

This sequence belongs to the alpha-ketoglutarate dehydrogenase family. As to quaternary structure, homodimer. Part of the 2-oxoglutarate dehydrogenase (OGDH) complex composed of E1 (2-oxoglutarate dehydrogenase), E2 (dihydrolipoamide succinyltransferase) and E3 (dihydrolipoamide dehydrogenase); the complex contains multiple copies of the three enzymatic components (E1, E2 and E3). The cofactor is thiamine diphosphate.

The catalysed reaction is N(6)-[(R)-lipoyl]-L-lysyl-[protein] + 2-oxoglutarate + H(+) = N(6)-[(R)-S(8)-succinyldihydrolipoyl]-L-lysyl-[protein] + CO2. Functionally, E1 component of the 2-oxoglutarate dehydrogenase (OGDH) complex which catalyzes the decarboxylation of 2-oxoglutarate, the first step in the conversion of 2-oxoglutarate to succinyl-CoA and CO(2). The chain is 2-oxoglutarate dehydrogenase E1 component from Geobacillus kaustophilus (strain HTA426).